The primary structure comprises 1766 residues: DNA-directed RNA polymerase II subunit RPB1-A (1766 aa).

Zn(2+)-binding residues include C69, C72, C79, and H82. Residues D487, D489, and D491 each coordinate Mg(2+). The tract at residues 813–825 is bridging helix; the sequence is PHEFFFHTMAGRE. The tract at residues 1660 to 1766 is disordered; it reads HAMSSAAPPS…EFGDEEEEEQ (107 aa). The span at 1706-1716 shows a compositional bias: basic and acidic residues; it reads RGDEPSTHRSD. Low complexity predominate over residues 1742–1756; the sequence is PTAKTPQQAAPPTAA.

Belongs to the RNA polymerase beta' chain family. As to quaternary structure, component of the RNA polymerase II (Pol II) complex consisting of 12 subunits.

It is found in the nucleus. It catalyses the reaction RNA(n) + a ribonucleoside 5'-triphosphate = RNA(n+1) + diphosphate. Functionally, DNA-dependent RNA polymerase catalyzes the transcription of DNA into RNA using the four ribonucleoside triphosphates as substrates. Largest and catalytic component of RNA polymerase II which synthesizes mRNA precursors and many functional non-coding RNAs. Forms the polymerase active center together with the second largest subunit. Pol II is the central component of the basal RNA polymerase II transcription machinery. It is composed of mobile elements that move relative to each other. RPB1 is part of the core element with the central large cleft, the clamp element that moves to open and close the cleft and the jaws that are thought to grab the incoming DNA template. At the start of transcription, a single-stranded DNA template strand of the promoter is positioned within the central active site cleft of Pol II. A bridging helix emanates from RPB1 and crosses the cleft near the catalytic site and is thought to promote translocation of Pol II by acting as a ratchet that moves the RNA-DNA hybrid through the active site by switching from straight to bent conformations at each step of nucleotide addition. During transcription elongation, Pol II moves on the template as the transcript elongates. This chain is DNA-directed RNA polymerase II subunit RPB1-A (TRP4.8), found in Trypanosoma brucei brucei.